Here is a 389-residue protein sequence, read N- to C-terminus: Succinate--CoA ligase [ADP-forming] subunit beta (389 aa).

The 236-residue stretch at 9–244 folds into the ATP-grasp domain; it reads KELLRQFNVP…IDEEDAAEIE (236 aa). Residues K46, 53–55, E99, A102, and E107 contribute to the ATP site; that span reads GRG. N199 and D213 together coordinate Mg(2+). Residues N264 and 321–323 each bind substrate; that span reads GIM.

Belongs to the succinate/malate CoA ligase beta subunit family. In terms of assembly, heterotetramer of two alpha and two beta subunits. Mg(2+) is required as a cofactor.

The enzyme catalyses succinate + ATP + CoA = succinyl-CoA + ADP + phosphate. It catalyses the reaction GTP + succinate + CoA = succinyl-CoA + GDP + phosphate. The protein operates within carbohydrate metabolism; tricarboxylic acid cycle; succinate from succinyl-CoA (ligase route): step 1/1. Its function is as follows. Succinyl-CoA synthetase functions in the citric acid cycle (TCA), coupling the hydrolysis of succinyl-CoA to the synthesis of either ATP or GTP and thus represents the only step of substrate-level phosphorylation in the TCA. The beta subunit provides nucleotide specificity of the enzyme and binds the substrate succinate, while the binding sites for coenzyme A and phosphate are found in the alpha subunit. In Polynucleobacter necessarius subsp. necessarius (strain STIR1), this protein is Succinate--CoA ligase [ADP-forming] subunit beta.